Consider the following 940-residue polypeptide: MMNDYKNTLNLPKTKFPMKANLLISELKILECWKKNNLYSIIRENKKGKKTFFLHDGPPYANGDIHIGHAVNKILKDIIIKFKSLFGFDAPYMPGWDCHGLPIELQVEKKINQNINKINHKIFREKCRNYALDQVNKQKKEFIRLGVIGDWNNPYLTMDFHTEANILRTFKNLIKKKYLYRGIKPINWCIDCKSSLSDSEIDYNIKESNSIDVSFSACDNNKILKIFNSEKKFDKIKAIIWTTTPWTIIANRAISVNPNFIYLLVKCNKEIFIIAESLLDKTLARLNIKKSKILGSVYGKKLKFLYFKHPLNKIHVPMILNEYVDFKSGSGIVHVAPNYGEEDYIIGKKYKLNMYDPIDSNGNYLPGTFPGLDGLNIFKSEEVVLNLLKNNHSLYSKKIINHSYPHCWRHKSPTFFRATNQWFFNIDNNNLRNKTISEIKKILWIPKWGMNQIIDLLSNRPDWCISRQRVWGVPIAVFINKKNKEIHPNTVELIEKVSKKIEKKGVQAWWDINKSEILDKDSDKYKKVLDTLDVWFDSGSTYYSILIKKWNSLNKNKVDLYLEGSDQYRGWFMSSIILSIAITGGIPCKKILAHGFVVDSNGKKMSKSIGNVISPKDIINEFGADILRLWVASSDYKSDISISKEILLRTVDIYRRIRNTSRFLLSNLNDFNPEFNSINLENMLSIDQWAIIKTNNRQKKIKNAYEEYNFHKVVSNIVDFCSLDMGSFYLDIIKDRQYTNYIDSLARRSCQTAILYIIECLVRWIMPILSFTSHEIWKYIPGKREKYVFLSEWVKEIPCENINSYISKSLWKILIKIKNEINKIIEIKKLEDKIKSSLELKITLYAESFIFEELILLKKELNFAFLVSYVSIKKYENSKENAFKSKSIKNLKILAEKFDGKKCLRCWNYTNDIVNDVKYNKICNRCINNINGVEEKRKYF.

Residues 59–69 carry the 'HIGH' region motif; that stretch reads PYANGDIHIGH. Glu563 lines the L-isoleucyl-5'-AMP pocket. Residues 604 to 608 carry the 'KMSKS' region motif; it reads KMSKS. Lys607 is an ATP binding site. Zn(2+)-binding residues include Cys903, Cys906, Cys923, and Cys926.

This sequence belongs to the class-I aminoacyl-tRNA synthetase family. IleS type 1 subfamily. In terms of assembly, monomer. Zn(2+) is required as a cofactor.

The protein resides in the cytoplasm. It catalyses the reaction tRNA(Ile) + L-isoleucine + ATP = L-isoleucyl-tRNA(Ile) + AMP + diphosphate. Functionally, catalyzes the attachment of isoleucine to tRNA(Ile). As IleRS can inadvertently accommodate and process structurally similar amino acids such as valine, to avoid such errors it has two additional distinct tRNA(Ile)-dependent editing activities. One activity is designated as 'pretransfer' editing and involves the hydrolysis of activated Val-AMP. The other activity is designated 'posttransfer' editing and involves deacylation of mischarged Val-tRNA(Ile). In Wigglesworthia glossinidia brevipalpis, this protein is Isoleucine--tRNA ligase.